The following is a 151-amino-acid chain: UPF0208 membrane protein PC1_2779 (151 aa).

The next 2 helical transmembrane spans lie at 46-66 (FGIR…IALG) and 69-89 (LGPA…GLWW).

This sequence belongs to the UPF0208 family.

It localises to the cell inner membrane. The chain is UPF0208 membrane protein PC1_2779 from Pectobacterium carotovorum subsp. carotovorum (strain PC1).